The following is a 128-amino-acid chain: uncharacterized protein (128 aa).

To M.jannaschii MJ0766.

This is an uncharacterized protein from Methanocaldococcus jannaschii (strain ATCC 43067 / DSM 2661 / JAL-1 / JCM 10045 / NBRC 100440) (Methanococcus jannaschii).